Consider the following 464-residue polypeptide: Delta(5) fatty acid desaturase A (464 aa).

Residues 13–90 (GKQYSWSELA…LKNYEIGYIS (78 aa)) enclose the Cytochrome b5 heme-binding domain. H48 and H71 together coordinate heme. A run of 2 helical transmembrane segments spans residues 125-145 (AVSI…TYYL) and 153-173 (FYLN…FSMH). Positions 176-180 (HDSCH) match the Histidine box-1 motif. The short motif at 212–217 (HVIGHH) is the Histidine box-2 element. Residues 318 to 338 (FTDLICYFLIAEFVFGWYLTI) form a helical membrane-spanning segment. The short motif at 396 to 400 (QVVHH) is the Histidine box-3 element.

Belongs to the fatty acid desaturase type 1 family. Fe cation serves as cofactor.

The protein localises to the membrane. In terms of biological role, specific for desaturation of the 5 position in C16 and C18 fatty acids. The polypeptide is Delta(5) fatty acid desaturase A (fadA) (Dictyostelium discoideum (Social amoeba)).